Here is a 156-residue protein sequence, read N- to C-terminus: Large ribosomal subunit protein uL11 (156 aa).

The tract at residues 1 to 20 (MAQSVKTMVEGGKATTGPPI) is disordered.

The protein belongs to the universal ribosomal protein uL11 family. Part of the ribosomal stalk of the 50S ribosomal subunit. Interacts with L10 and the large rRNA to form the base of the stalk. L10 forms an elongated spine to which L12 dimers bind in a sequential fashion forming a multimeric L10(L12)X complex.

Forms part of the ribosomal stalk which helps the ribosome interact with GTP-bound translation factors. The polypeptide is Large ribosomal subunit protein uL11 (Thermoplasma acidophilum (strain ATCC 25905 / DSM 1728 / JCM 9062 / NBRC 15155 / AMRC-C165)).